We begin with the raw amino-acid sequence, 238 residues long: 2,3,4,5-tetrahydropyridine-2,6-dicarboxylate N-acetyltransferase (238 aa).

The protein belongs to the transferase hexapeptide repeat family. DapH subfamily.

It carries out the reaction (S)-2,3,4,5-tetrahydrodipicolinate + acetyl-CoA + H2O = L-2-acetamido-6-oxoheptanedioate + CoA. It participates in amino-acid biosynthesis; L-lysine biosynthesis via DAP pathway; LL-2,6-diaminopimelate from (S)-tetrahydrodipicolinate (acetylase route): step 1/3. Functionally, catalyzes the transfer of an acetyl group from acetyl-CoA to tetrahydrodipicolinate. In Thermotoga neapolitana (strain ATCC 49049 / DSM 4359 / NBRC 107923 / NS-E), this protein is 2,3,4,5-tetrahydropyridine-2,6-dicarboxylate N-acetyltransferase.